Here is a 495-residue protein sequence, read N- to C-terminus: Dipeptide and tripeptide permease B (495 aa).

Topologically, residues 1–16 are cytoplasmic; sequence MDNKVSILNQPKPFKM. The helical transmembrane segment at 17 to 37 threads the bilayer; it reads IFFIELWERFGYYGLQGILAV. Over 38-50 the chain is Periplasmic; sequence YFVDKLGFSMQDS. The chain crosses the membrane as a helical span at residues 51 to 71; sequence FVTFGAFAALVYGLVSVGGYV. The Cytoplasmic segment spans residues 72 to 80; it reads GDYVLGTKR. A helical membrane pass occupies residues 81–101; the sequence is TMVFGAVVLALGYFLMGFSIL. Topologically, residues 102–104 are periplasmic; that stretch reads NPN. Residues 105–125 traverse the membrane as a helical segment; the sequence is FIYVALGAIAVGNGLFKANPS. At 126–144 the chain is on the cytoplasmic side; the sequence is SLLAKCYEKGDSRLDGAFT. Residues 145-165 traverse the membrane as a helical segment; sequence LYYMSINIGSLVSLSISPVIA. Residues 166–170 lie on the Periplasmic side of the membrane; that stretch reads NNYGY. A helical membrane pass occupies residues 171 to 191; that stretch reads EYAFIICGLGLIASLFSYFSL. Residues 192 to 209 are Cytoplasmic-facing; sequence RSTVQGIGSEPDALPLNK. The chain crosses the membrane as a helical span at residues 210-230; that stretch reads TKALIVLIGTIASTLVCAWLL. Residue glutamine 231 is a topological domain, periplasmic. A helical membrane pass occupies residues 232–252; sequence NIMMANLALGLIGVGVVGFFL. The Cytoplasmic segment spans residues 253-265; sequence KETFKEVGEQRNK. Residues 266–286 traverse the membrane as a helical segment; it reads MIVAFILMLQAIIFYVLYAQM. The Periplasmic portion of the chain corresponds to 287 to 309; sequence PTSLNFFAINNVHSELFGMDINP. Residues 310 to 330 traverse the membrane as a helical segment; the sequence is VSLQALNPFWVIFCSPILAYL. Topologically, residues 331 to 348 are cytoplasmic; sequence YTYYGNQNKDLSMPGKFT. The chain crosses the membrane as a helical span at residues 349-369; the sequence is VGMFMCAFGFLSVAAAGNWFA. The Periplasmic segment spans residues 370 to 373; that stretch reads DQAG. The helical transmembrane segment at 374 to 394 threads the bilayer; sequence MVSVWWMVLVYLFQSLGELMI. Topologically, residues 395–409 are cytoplasmic; the sequence is SGLGLAMVASLVPQR. Residues 410 to 430 form a helical membrane-spanning segment; that stretch reads LMGFTMGAWFLTQAASFIIGG. Topologically, residues 431–454 are periplasmic; that stretch reads YVATFSATPEHLTDPLDTLPVYTE. Residues 455–475 form a helical membrane-spanning segment; the sequence is LFQNIGFVTLAVAIVMAITAP. Topologically, residues 476 to 495 are cytoplasmic; that stretch reads KLNKMMTSSQPEDAELVEQP.

Belongs to the major facilitator superfamily. Proton-dependent oligopeptide transporter (POT/PTR) (TC 2.A.17) family. DtpB subfamily.

It localises to the cell inner membrane. In terms of biological role, proton-dependent permease that transports di- and tripeptides. The polypeptide is Dipeptide and tripeptide permease B (Aliivibrio fischeri (strain MJ11) (Vibrio fischeri)).